A 242-amino-acid polypeptide reads, in one-letter code: UDP-2,3-diacylglucosamine hydrolase (242 aa).

5 residues coordinate Mn(2+): D7, H9, D40, N78, and H113. A substrate-binding site is contributed by 78–79; the sequence is NR. Substrate is bound by residues D121, S159, T163, K166, and H194. Positions 194 and 196 each coordinate Mn(2+).

The protein belongs to the LpxH family. Requires Mn(2+) as cofactor.

The protein localises to the cell inner membrane. It catalyses the reaction UDP-2-N,3-O-bis[(3R)-3-hydroxytetradecanoyl]-alpha-D-glucosamine + H2O = 2-N,3-O-bis[(3R)-3-hydroxytetradecanoyl]-alpha-D-glucosaminyl 1-phosphate + UMP + 2 H(+). Its pathway is glycolipid biosynthesis; lipid IV(A) biosynthesis; lipid IV(A) from (3R)-3-hydroxytetradecanoyl-[acyl-carrier-protein] and UDP-N-acetyl-alpha-D-glucosamine: step 4/6. In terms of biological role, hydrolyzes the pyrophosphate bond of UDP-2,3-diacylglucosamine to yield 2,3-diacylglucosamine 1-phosphate (lipid X) and UMP by catalyzing the attack of water at the alpha-P atom. Involved in the biosynthesis of lipid A, a phosphorylated glycolipid that anchors the lipopolysaccharide to the outer membrane of the cell. The protein is UDP-2,3-diacylglucosamine hydrolase of Ectopseudomonas mendocina (strain ymp) (Pseudomonas mendocina).